A 251-amino-acid chain; its full sequence is LexA repressor (251 aa).

The segment at residues 26-46 (FDEMKDALGLKSKSGIHRLIK) is a DNA-binding region (H-T-H motif). Active-site for autocatalytic cleavage activity residues include Ser-172 and Lys-210.

It belongs to the peptidase S24 family. In terms of assembly, homodimer.

The catalysed reaction is Hydrolysis of Ala-|-Gly bond in repressor LexA.. Its function is as follows. Represses a number of genes involved in the response to DNA damage (SOS response), including recA and lexA. In the presence of single-stranded DNA, RecA interacts with LexA causing an autocatalytic cleavage which disrupts the DNA-binding part of LexA, leading to derepression of the SOS regulon and eventually DNA repair. The chain is LexA repressor from Rhodospirillum rubrum (strain ATCC 11170 / ATH 1.1.1 / DSM 467 / LMG 4362 / NCIMB 8255 / S1).